The following is a 713-amino-acid chain: Elongation factor G (713 aa).

The tr-type G domain occupies 8-290; sequence ERYRNFGIMA…GVIQLLPSPV (283 aa). Residues 17–24, 88–92, and 142–145 contribute to the GTP site; these read AHIDAGKT, DTPGH, and NKMD.

This sequence belongs to the TRAFAC class translation factor GTPase superfamily. Classic translation factor GTPase family. EF-G/EF-2 subfamily.

The protein localises to the cytoplasm. In terms of biological role, catalyzes the GTP-dependent ribosomal translocation step during translation elongation. During this step, the ribosome changes from the pre-translocational (PRE) to the post-translocational (POST) state as the newly formed A-site-bound peptidyl-tRNA and P-site-bound deacylated tRNA move to the P and E sites, respectively. Catalyzes the coordinated movement of the two tRNA molecules, the mRNA and conformational changes in the ribosome. This Stenotrophomonas maltophilia (strain K279a) protein is Elongation factor G.